Consider the following 111-residue polypeptide: Large ribosomal subunit protein uL22 (111 aa).

It belongs to the universal ribosomal protein uL22 family. As to quaternary structure, part of the 50S ribosomal subunit.

Its function is as follows. This protein binds specifically to 23S rRNA; its binding is stimulated by other ribosomal proteins, e.g. L4, L17, and L20. It is important during the early stages of 50S assembly. It makes multiple contacts with different domains of the 23S rRNA in the assembled 50S subunit and ribosome. In terms of biological role, the globular domain of the protein is located near the polypeptide exit tunnel on the outside of the subunit, while an extended beta-hairpin is found that lines the wall of the exit tunnel in the center of the 70S ribosome. The sequence is that of Large ribosomal subunit protein uL22 from Chlamydia muridarum (strain MoPn / Nigg).